We begin with the raw amino-acid sequence, 672 residues long: Nuclear hormone receptor family member nhr-5 (672 aa).

Residues 1 to 19 (MSSGGNSSNVNRNSGSSNV) are compositionally biased toward low complexity. Residues 1-38 (MSSGGNSSNVNRNSGSSNVITLNDSDEETEDSNLGSSS) are disordered. The nuclear receptor DNA-binding region spans 40–115 (TNLCKVCGAE…EGMNPAYVRP (76 aa)). 2 consecutive NR C4-type zinc fingers follow at residues 43–63 (CKVC…CVGC) and 79–98 (CAAN…CRSC). In terms of domain architecture, NR LBD spans 155–424 (EMRTILMTLL…PLLTDLFGCF (270 aa)). Positions 550 to 577 (NIQGPSHLPQCGSTVTQRPTVPSSTTSS) are disordered. Residues 562–577 (STVTQRPTVPSSTTSS) are compositionally biased toward low complexity.

Belongs to the nuclear hormone receptor family.

It localises to the nucleus. Functionally, orphan nuclear receptor. This is Nuclear hormone receptor family member nhr-5 (nhr-5) from Caenorhabditis elegans.